A 291-amino-acid chain; its full sequence is MKKAILIDGNSLAYRAYFATWKQVEYAKQNNLPFNNAIRTMLLMCWNLIKANVYQYGIVSFDTKAPTFRDQIYEGYKQKRVKTPVELLVQIPLIKQALVYLGFLVCEKDGFEADDLIGSYANLFTKQEITVDIYSSDRDMLQLVNAFTNVFLCIKGTKEMVMYNNENFKSLFYGLAPYQVVEYKGLVGDNSDNLAGIKGIGPIKGIELLQQYGTIDNIYTNFNNLPNQLQKLLNNQKEIAKTFSFLAKIKTDIELDQNIDLTGLKPIQKQALIQLLSENKINTLVEKFSKI.

The region spanning 176-269 (APYQVVEYKG…DLTGLKPIQK (94 aa)) is the 5'-3' exonuclease domain.

Functionally, 5'-3' exonuclease acting preferentially on double-stranded DNA. The protein is 5'-3' exonuclease (polA) of Mycoplasma genitalium (strain ATCC 33530 / DSM 19775 / NCTC 10195 / G37) (Mycoplasmoides genitalium).